The chain runs to 705 residues: Polyribonucleotide nucleotidyltransferase (705 aa).

Mg(2+) is bound by residues Asp486 and Asp492. The 60-residue stretch at 553 to 612 (PQFHTMKVDPEKIRDIIGKGGATIRSITEETGASIDIDDDGTVKIYGDDGDSLQGAINRI) folds into the KH domain. The S1 motif domain occupies 622 to 690 (GEVYKGKVVR…QRGRIKLSIK (69 aa)).

This sequence belongs to the polyribonucleotide nucleotidyltransferase family. In terms of assembly, component of the RNA degradosome, which is a multiprotein complex involved in RNA processing and mRNA degradation. Mg(2+) is required as a cofactor.

Its subcellular location is the cytoplasm. The enzyme catalyses RNA(n+1) + phosphate = RNA(n) + a ribonucleoside 5'-diphosphate. Involved in mRNA degradation. Catalyzes the phosphorolysis of single-stranded polyribonucleotides processively in the 3'- to 5'-direction. The polypeptide is Polyribonucleotide nucleotidyltransferase (Teredinibacter turnerae (strain ATCC 39867 / T7901)).